A 522-amino-acid polypeptide reads, in one-letter code: DNA-binding protein Ikaros (522 aa).

Disordered stretches follow at residues 1–48 and 96–115; these read MEME…HNNR and AKVN…YSSA. 4 consecutive C2H2-type zinc fingers follow at residues 125-147, 153-175, 181-203, and 209-232; these read LKCD…KRSH, FQCT…IKLH, FKCH…LRTH, and HKCA…ERCH. Positions 379–406 are disordered; the sequence is KSASSEKDGSPSHSGQDSTDTESNNEEK. 2 consecutive C2H2-type zinc fingers follow at residues 468-490 and 496-520; these read YRCE…MGCH and FECN…RGEH.

The protein belongs to the Ikaros C2H2-type zinc-finger protein family. In terms of tissue distribution, expression mainly limited to thymus, spleen and pronephros. Very low expression in liver. No expression in testis, brain, eye and muscle.

It is found in the nucleus. Binds and activates the enhancer (delta-A element) of the CD3-delta gene. Functions in the specification and the maturation of the T-lymphocyte. Also interacts with a critical control element in the TDT (terminal deoxynucleotidyltransferase) promoter as well as with the promoters for other genes expressed during early stages of B- and T-cell development. Function is isoform-specific and is modulated by dominant-negative inactive isoforms. The sequence is that of DNA-binding protein Ikaros (ikzf1) from Oncorhynchus mykiss (Rainbow trout).